The primary structure comprises 343 residues: L-threonine 3-dehydrogenase (343 aa).

Zn(2+) is bound at residue cysteine 40. Active-site charge relay system residues include threonine 42 and histidine 45. Residues histidine 65, glutamate 66, cysteine 95, cysteine 98, cysteine 101, and cysteine 109 each coordinate Zn(2+). Residues isoleucine 177, aspartate 197, arginine 202, 264–266 (LGI), and 288–289 (IY) contribute to the NAD(+) site.

The protein belongs to the zinc-containing alcohol dehydrogenase family. As to quaternary structure, homotetramer. Zn(2+) serves as cofactor.

It localises to the cytoplasm. It catalyses the reaction L-threonine + NAD(+) = (2S)-2-amino-3-oxobutanoate + NADH + H(+). It functions in the pathway amino-acid degradation; L-threonine degradation via oxydo-reductase pathway; glycine from L-threonine: step 1/2. Its function is as follows. Catalyzes the NAD(+)-dependent oxidation of L-threonine to 2-amino-3-ketobutyrate. The polypeptide is L-threonine 3-dehydrogenase (Aliivibrio fischeri (strain MJ11) (Vibrio fischeri)).